The following is a 312-amino-acid chain: uncharacterized protein (312 aa).

An HTH lysR-type domain is found at 8–65 (PGLTCFEIFLAIAEAGSLGGAARELGLTQQAVSRRLASMEAQIGVRLAIRTTRGSQLT). Residues 25–45 (LGGAARELGLTQQAVSRRLAS) constitute a DNA-binding region (H-T-H motif).

Belongs to the LysR transcriptional regulatory family.

This is an uncharacterized protein from Mycobacterium tuberculosis (strain CDC 1551 / Oshkosh).